Reading from the N-terminus, the 1225-residue chain is DNA-directed RNA polymerase subunit beta' (1225 aa).

Zn(2+)-binding residues include cysteine 60, cysteine 62, cysteine 75, and cysteine 78. Mg(2+) contacts are provided by aspartate 450, aspartate 452, and aspartate 454. Residues cysteine 818, cysteine 892, cysteine 899, and cysteine 902 each coordinate Zn(2+).

This sequence belongs to the RNA polymerase beta' chain family. As to quaternary structure, the RNAP catalytic core consists of 2 alpha, 1 beta, 1 beta' and 1 omega subunit. When a sigma factor is associated with the core the holoenzyme is formed, which can initiate transcription. It depends on Mg(2+) as a cofactor. Zn(2+) serves as cofactor.

The enzyme catalyses RNA(n) + a ribonucleoside 5'-triphosphate = RNA(n+1) + diphosphate. In terms of biological role, DNA-dependent RNA polymerase catalyzes the transcription of DNA into RNA using the four ribonucleoside triphosphates as substrates. This is DNA-directed RNA polymerase subunit beta' from Streptococcus pneumoniae serotype 19F (strain G54).